The primary structure comprises 395 residues: tRNA (guanine-N(7)-)-methyltransferase (395 aa).

3 residues coordinate S-adenosyl-L-methionine: glutamate 126, glutamate 151, and aspartate 178. Residues lysine 204 and aspartate 234 each coordinate substrate.

The protein belongs to the class I-like SAM-binding methyltransferase superfamily. TrmB family.

The enzyme catalyses guanosine(46) in tRNA + S-adenosyl-L-methionine = N(7)-methylguanosine(46) in tRNA + S-adenosyl-L-homocysteine. It participates in tRNA modification; N(7)-methylguanine-tRNA biosynthesis. Functionally, catalyzes the formation of N(7)-methylguanine at position 46 (m7G46) in tRNA. This is tRNA (guanine-N(7)-)-methyltransferase from Campylobacter fetus subsp. fetus (strain 82-40).